We begin with the raw amino-acid sequence, 422 residues long: Histidine--tRNA ligase (422 aa).

The protein belongs to the class-II aminoacyl-tRNA synthetase family. Homodimer.

Its subcellular location is the cytoplasm. The catalysed reaction is tRNA(His) + L-histidine + ATP = L-histidyl-tRNA(His) + AMP + diphosphate + H(+). This Vibrio campbellii (strain ATCC BAA-1116) protein is Histidine--tRNA ligase.